Here is a 514-residue protein sequence, read N- to C-terminus: 2,3-bisphosphoglycerate-independent phosphoglycerate mutase (514 aa).

2 residues coordinate Mn(2+): Asp-14 and Ser-64. The active-site Phosphoserine intermediate is Ser-64. Substrate contacts are provided by residues His-125, 155–156 (RD), Arg-187, Arg-193, 263–266 (RADR), and Lys-336. Positions 403, 407, 444, 445, and 463 each coordinate Mn(2+).

It belongs to the BPG-independent phosphoglycerate mutase family. Monomer. Mn(2+) serves as cofactor.

The enzyme catalyses (2R)-2-phosphoglycerate = (2R)-3-phosphoglycerate. It functions in the pathway carbohydrate degradation; glycolysis; pyruvate from D-glyceraldehyde 3-phosphate: step 3/5. Functionally, catalyzes the interconversion of 2-phosphoglycerate and 3-phosphoglycerate. In Shigella flexneri, this protein is 2,3-bisphosphoglycerate-independent phosphoglycerate mutase.